An 854-amino-acid chain; its full sequence is Lysine-specific demethylase 3 (854 aa).

Residues Gln-64–Asp-88 form a disordered region. The JmjC domain maps to Leu-601–Arg-806. 3 residues coordinate Fe cation: His-643, Asp-645, and His-774.

It belongs to the JHDM2-like histone demethylase family. Fe(2+) is required as a cofactor. In terms of tissue distribution, expressed in neurons close to the dorsal lateral neurons involved in circadian rhythm.

It is found in the nucleus. The protein localises to the cytoplasm. It carries out the reaction N(6),N(6)-dimethyl-L-lysyl(9)-[histone H3] + 2 2-oxoglutarate + 2 O2 = L-lysyl(9)-[histone H3] + 2 formaldehyde + 2 succinate + 2 CO2. Its function is as follows. Histone demethylase that specifically demethylates 'Lys-10' of histone H3 (H3K9), thereby playing a central role in histone code. Demethylation of Lys residue generates formaldehyde and succinate. Probably involved in regulation of chromatin structure, promoting expansion of euchromatin. Negatively regulates rhino-dependent piRNA production capacity of several genomic regions; may help define the frontiers of piRNA clusters by regulating histone methylation levels. May be involved in regulation of behavior and circadian rhythms. This Drosophila melanogaster (Fruit fly) protein is Lysine-specific demethylase 3.